A 190-amino-acid polypeptide reads, in one-letter code: Inner membrane-spanning protein YciB (190 aa).

5 helical membrane passes run 22 to 42, 50 to 70, 76 to 96, 118 to 138, and 148 to 168; these read IYVA…LTFA, MQLI…FLHD, WKVT…HAMG, INWA…YVAF, and FKVF…GFYI.

This sequence belongs to the YciB family.

It localises to the cell inner membrane. In terms of biological role, plays a role in cell envelope biogenesis, maintenance of cell envelope integrity and membrane homeostasis. The sequence is that of Inner membrane-spanning protein YciB from Vibrio campbellii (strain ATCC BAA-1116).